Reading from the N-terminus, the 598-residue chain is UvrABC system protein C (598 aa).

One can recognise a GIY-YIG domain in the interval 14–91 (DSPGCYLHKD…IQKNMPKYNI (78 aa)). The 36-residue stretch at 196–231 (DKIIEDLRSKMLAASEEMAFERAAEYRDLISGIATM) folds into the UVR domain.

Belongs to the UvrC family. As to quaternary structure, interacts with UvrB in an incision complex.

Its subcellular location is the cytoplasm. The UvrABC repair system catalyzes the recognition and processing of DNA lesions. UvrC both incises the 5' and 3' sides of the lesion. The N-terminal half is responsible for the 3' incision and the C-terminal half is responsible for the 5' incision. This is UvrABC system protein C from Streptococcus pyogenes serotype M3 (strain ATCC BAA-595 / MGAS315).